A 156-amino-acid chain; its full sequence is Adult-specific rigid cuticular protein 15.5 (156 aa).

The 62-residue stretch at isoleucine 23–alanine 84 folds into the Chitin-binding type R&amp;R domain.

In terms of biological role, component of the rigid cuticle of the spider. The protein is Adult-specific rigid cuticular protein 15.5 of Araneus diadematus (European garden spider).